The primary structure comprises 210 residues: Putative biopolymer transport protein ExbB-like 3 (210 aa).

3 helical membrane-spanning segments follow: residues 2–22 (AGGI…ALII), 104–124 (LFQT…ILGL), and 152–172 (LVST…ANVF).

This sequence belongs to the ExbB/TolQ family.

Its subcellular location is the cell inner membrane. In terms of biological role, involved in the TonB-dependent energy-dependent transport of various receptor-bound substrates. Protects ExbD from proteolytic degradation and functionally stabilizes TonB. This chain is Putative biopolymer transport protein ExbB-like 3, found in Synechocystis sp. (strain ATCC 27184 / PCC 6803 / Kazusa).